Consider the following 1031-residue polypeptide: Caprin-2 (1031 aa).

Disordered regions lie at residues 1–27, 364–458, 500–520, 605–658, and 830–876; these read MKSA…QSTL, LQEE…SWEN, PKDV…LPKD, DQAS…SSEA, and RSGT…SMTP. Polar residues-rich tracts occupy residues 425-439 and 446-458; these read VSVQ…SWTT and ASVQ…SWEN. A compositionally biased stretch (low complexity) spans 608 to 646; the sequence is SSGSETEFTTSETPEMVVSPCKPKPASALASPNPPLSKS. Positions 830 to 853 are enriched in polar residues; the sequence is RSGTSSGLQANSRAGWSDSSQVSS. Residues Ser-852 and Ser-853 each carry the phosphoserine modification. The region spanning 897–1031 is the C1q domain; sequence PQQMRVAFSA…TFSGYLLYQD (135 aa). Asp-982 and Glu-988 together coordinate Ca(2+).

The protein belongs to the caprin family. In terms of assembly, homotrimer; via C1q domain. Found in a complex with LRP6, CCNY and CDK14 during G2/M stage; CAPRIN2 functions as a scaffold for the complex by binding to CCNY via its N terminus and to CDK14 via its C terminus. Interacts with LRP5. Interacts with LRP6. Specifically expressed in brain (at protein level).

It localises to the cytoplasm. The protein localises to the cell membrane. In terms of biological role, promotes phosphorylation of the Wnt coreceptor LRP6, leading to increased activity of the canonical Wnt signaling pathway. Facilitates constitutive LRP6 phosphorylation by CDK14/CCNY during G2/M stage of the cell cycle, which may potentiate cells for Wnt signaling. May regulate the transport and translation of mRNAs, modulating for instance the expression of proteins involved in synaptic plasticity in neurons. Involved in regulation of growth as erythroblasts shift from a highly proliferative state towards their terminal phase of differentiation. May be involved in apoptosis. This Mus musculus (Mouse) protein is Caprin-2.